We begin with the raw amino-acid sequence, 328 residues long: MSSTPNKQAGYPRLVADIGGTNARFALETAPRVIEKAAVLPCKDYDTVTDAVRAYLNQSGATAVRHAAFAIANPILGDWVQMTNHHWAFSIETTRQTLGLDTLILLNDFTAQALAVTQTSSKDLMQVGGQKPVEFAPKAVIGPGTGLGVSGLVHSHAGWVALAGEGGHTSFPPFDDMEVLIWQYAKNKYGHVSAERFLSGAGLSLVYEALAAKQKAKPAKLMPSEITEKALSGASPLCRQTLDIFCAMLGTVASNLALTLGARGGVYLCGGIIPRVLEYFKTSPFRSRFENKGRFEAYLAAIPVYVVLSEFPGISGAAAALDNHLRNV.

Alanine 16 to threonine 21 contacts ATP.

Belongs to the bacterial glucokinase family.

The protein resides in the cytoplasm. It carries out the reaction D-glucose + ATP = D-glucose 6-phosphate + ADP + H(+). This is Glucokinase from Neisseria meningitidis serogroup C (strain 053442).